A 143-amino-acid polypeptide reads, in one-letter code: Spore coat protein P (143 aa).

The sHSP domain maps to 34–143; sequence FFDSEASTFV…VETVAFNKGL (110 aa).

It belongs to the small heat shock protein (HSP20) family.

The protein is Spore coat protein P (cotP) of Bacillus subtilis (strain 168).